Here is a 304-residue protein sequence, read N- to C-terminus: MSWIERIKSNITPTRKASIPEGVWTKCDSCGQVLYRAELERNLEVCPKCDHHMRMTARNRLHSLLDEGSLVELGSELEPKDELKFRDSKKYKDRLASAQKETGEKDALVVMKGTLYGMPVVAAAFEFAFMGGSMGSVVGARFVRAVEQAQEDNCPLICFSASGGARMQEALMSLMQMAKTSAALAKMQERGLPYISVLTDPTMGGVSASFAMLGDLNIAEPKALIGFAGPRVIEQTVREKLPPRFQRSEFLIEKGAIDMIVRRPEMRLKLASILAKLMNLPAPNPEAPREGVVVPPVPDQEPEA.

A CoA carboxyltransferase N-terminal domain is found at 23-292 (VWTKCDSCGQ…PNPEAPREGV (270 aa)). Residues C27, C30, C46, and C49 each coordinate Zn(2+). A C4-type zinc finger spans residues 27–49 (CDSCGQVLYRAELERNLEVCPKC). The segment at 284–304 (NPEAPREGVVVPPVPDQEPEA) is disordered. Positions 295–304 (PPVPDQEPEA) are enriched in pro residues.

It belongs to the AccD/PCCB family. As to quaternary structure, acetyl-CoA carboxylase is a heterohexamer composed of biotin carboxyl carrier protein (AccB), biotin carboxylase (AccC) and two subunits each of ACCase subunit alpha (AccA) and ACCase subunit beta (AccD). It depends on Zn(2+) as a cofactor.

Its subcellular location is the cytoplasm. It carries out the reaction N(6)-carboxybiotinyl-L-lysyl-[protein] + acetyl-CoA = N(6)-biotinyl-L-lysyl-[protein] + malonyl-CoA. Its pathway is lipid metabolism; malonyl-CoA biosynthesis; malonyl-CoA from acetyl-CoA: step 1/1. In terms of biological role, component of the acetyl coenzyme A carboxylase (ACC) complex. Biotin carboxylase (BC) catalyzes the carboxylation of biotin on its carrier protein (BCCP) and then the CO(2) group is transferred by the transcarboxylase to acetyl-CoA to form malonyl-CoA. The sequence is that of Acetyl-coenzyme A carboxylase carboxyl transferase subunit beta from Shigella flexneri.